We begin with the raw amino-acid sequence, 113 residues long: Dolichyl-diphosphooligosaccharide--protein glycosyltransferase subunit DAD1 (113 aa).

Residue S2 is modified to N-acetylserine. Topologically, residues S2–Y30 are cytoplasmic. A helical transmembrane segment spans residues L31 to F51. Residue P52 is a topological domain, lumenal. Residues F53–L73 form a helical membrane-spanning segment. The Cytoplasmic portion of the chain corresponds to R74–R92. A helical membrane pass occupies residues A93–G113.

It belongs to the DAD/OST2 family. In terms of assembly, component of the oligosaccharyltransferase (OST) complex. OST exists in two different complex forms which contain common core subunits RPN1, RPN2, OST48, OST4, DAD1 and TMEM258, either STT3A or STT3B as catalytic subunits, and form-specific accessory subunits. STT3A complex assembly occurs through the formation of 3 subcomplexes. Subcomplex 1 contains RPN1 and TMEM258, subcomplex 2 contains the STT3A-specific subunits STT3A, DC2/OSTC, and KCP2 as well as the core subunit OST4, and subcomplex 3 contains RPN2, DAD1, and OST48. The STT3A complex can form stable complexes with the Sec61 complex or with both the Sec61 and TRAP complexes.

The protein resides in the endoplasmic reticulum membrane. The protein operates within protein modification; protein glycosylation. Functionally, subunit of the oligosaccharyl transferase (OST) complex that catalyzes the initial transfer of a defined glycan (Glc(3)Man(9)GlcNAc(2) in eukaryotes) from the lipid carrier dolichol-pyrophosphate to an asparagine residue within an Asn-X-Ser/Thr consensus motif in nascent polypeptide chains, the first step in protein N-glycosylation. N-glycosylation occurs cotranslationally and the complex associates with the Sec61 complex at the channel-forming translocon complex that mediates protein translocation across the endoplasmic reticulum (ER). All subunits are required for a maximal enzyme activity. The protein is Dolichyl-diphosphooligosaccharide--protein glycosyltransferase subunit DAD1 of Pongo abelii (Sumatran orangutan).